The chain runs to 202 residues: Large ribosomal subunit protein bL17 (202 aa).

Positions 130 to 142 are enriched in low complexity; sequence AAPAATAPAPVEE. The segment at 130-202 is disordered; the sequence is AAPAATAPAP…TEESTEDDKA (73 aa). Composition is skewed to acidic residues over residues 143 to 168 and 177 to 202; these read APAE…EASP and QPVE…DDKA.

The protein belongs to the bacterial ribosomal protein bL17 family. As to quaternary structure, part of the 50S ribosomal subunit. Contacts protein L32.

The protein is Large ribosomal subunit protein bL17 of Nocardioides sp. (strain ATCC BAA-499 / JS614).